Consider the following 339-residue polypeptide: Heat-inducible transcription repressor HrcA (339 aa).

This sequence belongs to the HrcA family.

Functionally, negative regulator of class I heat shock genes (grpE-dnaK-dnaJ and groELS operons). Prevents heat-shock induction of these operons. The chain is Heat-inducible transcription repressor HrcA from Clostridium perfringens (strain ATCC 13124 / DSM 756 / JCM 1290 / NCIMB 6125 / NCTC 8237 / Type A).